We begin with the raw amino-acid sequence, 341 residues long: Glycerol-3-phosphate dehydrogenase [NAD(P)+] (341 aa).

NADPH-binding residues include Ser-15, Trp-16, Arg-36, and Lys-110. Sn-glycerol 3-phosphate is bound by residues Lys-110, Gly-139, and Ser-141. Ala-143 lines the NADPH pocket. Positions 194, 247, 257, 258, and 259 each coordinate sn-glycerol 3-phosphate. The Proton acceptor role is filled by Lys-194. Arg-258 provides a ligand contact to NADPH. NADPH contacts are provided by Val-282 and Glu-284.

This sequence belongs to the NAD-dependent glycerol-3-phosphate dehydrogenase family.

It is found in the cytoplasm. The enzyme catalyses sn-glycerol 3-phosphate + NAD(+) = dihydroxyacetone phosphate + NADH + H(+). It catalyses the reaction sn-glycerol 3-phosphate + NADP(+) = dihydroxyacetone phosphate + NADPH + H(+). Its pathway is membrane lipid metabolism; glycerophospholipid metabolism. Catalyzes the reduction of the glycolytic intermediate dihydroxyacetone phosphate (DHAP) to sn-glycerol 3-phosphate (G3P), the key precursor for phospholipid synthesis. The chain is Glycerol-3-phosphate dehydrogenase [NAD(P)+] from Stenotrophomonas maltophilia (strain R551-3).